Here is a 372-residue protein sequence, read N- to C-terminus: Heat-inducible transcription repressor HrcA (372 aa).

The interval 296–331 (VSSGYGRSGEAGEPAGNDPVGEPETESETESQTNDM) is disordered.

The protein belongs to the HrcA family.

In terms of biological role, negative regulator of class I heat shock genes (grpE-dnaK-dnaJ and groELS operons). Prevents heat-shock induction of these operons. This chain is Heat-inducible transcription repressor HrcA, found in Bifidobacterium longum subsp. infantis (strain ATCC 15697 / DSM 20088 / JCM 1222 / NCTC 11817 / S12).